Here is a 522-residue protein sequence, read N- to C-terminus: Endochitinase 11 (522 aa).

Residues 1-24 (MLFSMVMFTERWWVGSKDCPRVPA) form the signal peptide. N-linked (GlcNAc...) asparagine glycosylation is found at asparagine 148 and asparagine 275. In terms of domain architecture, GH18 spans 235–522 (KHVYAPYVDF…ALTCLRNSTA (288 aa)). Glutamate 346 serves as the catalytic Proton donor. Residues asparagine 455 and asparagine 519 are each glycosylated (N-linked (GlcNAc...) asparagine).

The protein belongs to the glycosyl hydrolase 18 family. Chitinase class V subfamily.

The protein localises to the secreted. It catalyses the reaction Random endo-hydrolysis of N-acetyl-beta-D-glucosaminide (1-&gt;4)-beta-linkages in chitin and chitodextrins.. Functionally, secreted chitinase involved in the degradation of chitin, a component of the cell walls of fungi and exoskeletal elements of some animals (including worms and arthropods). Participates in the infection process and directly acts in the penetration process of the host cuticle. The protein is Endochitinase 11 (chi11) of Metarhizium anisopliae (Entomophthora anisopliae).